A 172-amino-acid polypeptide reads, in one-letter code: S-ribosylhomocysteine lyase (172 aa).

Residues His-54, His-58, and Cys-128 each coordinate Fe cation.

The protein belongs to the LuxS family. Homodimer. Fe cation serves as cofactor.

It carries out the reaction S-(5-deoxy-D-ribos-5-yl)-L-homocysteine = (S)-4,5-dihydroxypentane-2,3-dione + L-homocysteine. Its function is as follows. Involved in the synthesis of autoinducer 2 (AI-2) which is secreted by bacteria and is used to communicate both the cell density and the metabolic potential of the environment. The regulation of gene expression in response to changes in cell density is called quorum sensing. Catalyzes the transformation of S-ribosylhomocysteine (RHC) to homocysteine (HC) and 4,5-dihydroxy-2,3-pentadione (DPD). The protein is S-ribosylhomocysteine lyase of Aliivibrio fischeri (strain MJ11) (Vibrio fischeri).